We begin with the raw amino-acid sequence, 458 residues long: F-box/WD repeat-containing protein 9 (458 aa).

Residue Met1 is modified to N-acetylmethionine. The disordered stretch occupies residues 1-28; sequence MELPPGPRDDPHAWDDDSDPELEPDTDA. Over residues 16–28 the composition is skewed to acidic residues; that stretch reads DDSDPELEPDTDA. Phosphoserine occurs at positions 18 and 59. One can recognise an F-box domain in the interval 76 to 123; the sequence is VPGLLSLPPELLLEICAYLDARLVLHVLPRVCHALRDLVRDRVTWRLR. WD repeat units lie at residues 171–210, 224–261, 264–301, 305–342, 344–381, 387–424, and 427–458; these read GHFASIDSVLLLQGGTLCLSGSRDRNVNLWDLQQLGVEPS, THKGWVWSLAALDHRVCSGSWDSTVKLWDMAADGQQFG, KGKAAVLCLSYRPDILVTGTYDKKVTVYDPRVGPALLK, LHSSAVLALLADDRHIISGSEDHTLVVFDRRANSVLQR, QLDSYLLCMSYQEPQLWAGDNQGLLHVFANRSGCFQLV, GHRSQITGIKHSLGALYTTSTDKTIRVHVPTDPPRTIC, and SHHNVLNGICAEGNLVVAASGGLSLEVWRLQA.

In terms of assembly, interacts with SKP1 and CUL1.

Functionally, substrate-recognition component of the SCF (SKP1-CUL1-F-box protein)-type E3 ubiquitin ligase complex. This Bos taurus (Bovine) protein is F-box/WD repeat-containing protein 9 (FBXW9).